The primary structure comprises 548 residues: Glucose-6-phosphate isomerase (548 aa).

The Proton donor role is filled by E355. Residues H386 and K514 contribute to the active site.

The protein belongs to the GPI family.

Its subcellular location is the cytoplasm. It catalyses the reaction alpha-D-glucose 6-phosphate = beta-D-fructose 6-phosphate. It functions in the pathway carbohydrate biosynthesis; gluconeogenesis. It participates in carbohydrate degradation; glycolysis; D-glyceraldehyde 3-phosphate and glycerone phosphate from D-glucose: step 2/4. Catalyzes the reversible isomerization of glucose-6-phosphate to fructose-6-phosphate. The sequence is that of Glucose-6-phosphate isomerase from Proteus mirabilis (strain HI4320).